The primary structure comprises 133 residues: NVKAVWEHVKGHEEVYGAEALYRAFLCDPQTQTYFAGKDLSENSAFLHSHGKKVMCALTNAIAHIDDIDGCMSKLSDKHAHELMVDPGNFDILAHHILTVLAMFLSQLLTCANHRSVDKFLSCVKNVLTSRYR.

The region spanning 1–133 (NVKAVWEHVK…VKNVLTSRYR (133 aa)) is the Globin domain. Histidine 50 contacts O2. Residue histidine 79 coordinates heme b.

The protein belongs to the globin family. In terms of assembly, minor hemoglobin is a heterotetramer of two alpha-2 chains and two beta-2 chains. Red blood cells.

Involved in oxygen transport from the lung to the various peripheral tissues. In Pleurodeles waltl (Iberian ribbed newt), this protein is Hemoglobin subunit alpha-2.